Reading from the N-terminus, the 584-residue chain is DNA mismatch repair protein MutL (584 aa).

It belongs to the DNA mismatch repair MutL/HexB family.

Functionally, this protein is involved in the repair of mismatches in DNA. It is required for dam-dependent methyl-directed DNA mismatch repair. May act as a 'molecular matchmaker', a protein that promotes the formation of a stable complex between two or more DNA-binding proteins in an ATP-dependent manner without itself being part of a final effector complex. In Buchnera aphidicola subsp. Acyrthosiphon pisum (strain 5A), this protein is DNA mismatch repair protein MutL.